Consider the following 363-residue polypeptide: Cysteine proteinase 15A (363 aa).

A signal peptide spans 1 to 18 (MDRRFLFALFLFAAVATA). Residues 19 to 131 (VTDDTNNDDF…QKAPILPTTN (113 aa)) constitute a propeptide, activation peptide. Intrachain disulfides connect C153–C203 and C187–C236. C156 is a catalytic residue. N249 carries an N-linked (GlcNAc...) asparagine glycan. C292 and C347 are joined by a disulfide. Residues H299 and N326 contribute to the active site.

This sequence belongs to the peptidase C1 family.

The polypeptide is Cysteine proteinase 15A (Pisum sativum (Garden pea)).